We begin with the raw amino-acid sequence, 321 residues long: RNLGKVIDTLTCGFADLMGYIPLVGAPLGGAARALAHGVRVLEDGVNYATGNLPGCSFSIFLLALLSCLTVPASAHQVRNSTGLYHVTNDCPNSSIVYEAADAILHTPGCVPCVHEGNVSRCWVAVTPTVATRDGKLPTTQLRRHIDLLVGSATLCSALYVGDLCGSVFLVGQLFTFSPRRHWTTQGCNCSIYPGHITGHRMAWDMMMNWSPTAALVMAQLLRIPQAIMDMIAGAHWGVLAGIAYFSMVGNWAKVLVVLLLFAGVDAETYTSGGNAGHTMTGIVRFFAPGPKQNVHLINTNGSWHINSTALNCNDSLNTGW.

Residues arginine 1–asparagine 52 lie on the Cytoplasmic side of the membrane. The interaction with APOA2 stretch occupies residues valine 6–serine 57. The tract at residues tyrosine 48–glycine 51 is important for lipid droplets localization. Residues leucine 53–alanine 73 traverse the membrane as a helical segment. Positions leucine 62–alanine 75 are cleaved as a propeptide — ER anchor for the core protein, removed in mature form by host signal peptidase. The Lumenal segment spans residues serine 74–glycine 242. Asparagine 80, asparagine 93, and asparagine 118 each carry an N-linked (GlcNAc...) asparagine; by host glycan. The interval leucine 149–arginine 180 is important for fusion. N-linked (GlcNAc...) asparagine; by host glycosylation is present at asparagine 189. Residues isoleucine 243–alanine 263 traverse the membrane as a helical segment. The Lumenal portion of the chain corresponds to glycine 264–tryptophan 321. The segment at glutamate 268 to asparagine 294 is HVR1. N-linked (GlcNAc...) (high mannose) asparagine; by host glycosylation is found at asparagine 301, asparagine 307, and asparagine 314.

This sequence belongs to the hepacivirus polyprotein family. In terms of assembly, homooligomer. Interacts with E1 (via C-terminus). Interacts with the non-structural protein 5A. Interacts (via N-terminus) with host STAT1 (via SH2 domain); this interaction results in decreased STAT1 phosphorylation and ubiquitin-mediated proteasome-dependent STAT1 degradation, leading to decreased IFN-stimulated gene transcription. Interacts with host STAT3; this interaction constitutively activates STAT3. Interacts with host LTBR receptor. Interacts with host TNFRSF1A receptor and possibly induces apoptosis. Interacts with host HNRPK. Interacts with host YWHAE. Interacts with host UBE3A/E6AP. Interacts with host DDX3X. Interacts with host APOA2. Interacts with host RXRA protein. Interacts with host SP110 isoform 3/Sp110b; this interaction sequesters the transcriptional corepressor SP110 away from the nucleus. Interacts with host CREB3 nuclear transcription protein; this interaction triggers cell transformation. Interacts with host ACY3. Interacts with host C1QR1. Interacts with host RBM24; this interaction, which enhances the interaction of the mature core protein with 5'-UTR, may inhibit viral translation and favor replication. Interacts with host EIF2AK2/PKR; this interaction induces the autophosphorylation of EIF2AK2. Part of the viral assembly initiation complex composed of NS2, E1, E2, NS3, NS4A, NS5A and the mature core protein. As to quaternary structure, forms a heterodimer with envelope glycoprotein E2. Interacts with mature core protein. Interacts with protease NS2. The heterodimer E1/E2 interacts with host CLDN1; this interaction plays a role in viral entry into host cell. Interacts with host SPSB2 (via C-terminus). Part of the viral assembly initiation complex composed of NS2, E1, E2, NS3, NS4A, NS5A and the mature core protein. Forms a heterodimer with envelope glycoprotein E1. Interacts with host CD81 and SCARB1 receptors; these interactions play a role in viral entry into host cell. Interacts with host EIF2AK2/PKR; this interaction inhibits EIF2AK2 and probably allows the virus to evade the innate immune response. Interacts with host CD209/DC-SIGN and CLEC4M/DC-SIGNR. Interact with host SPCS1; this interaction is essential for viral particle assembly. Interacts with protease NS2. The heterodimer E1/E2 interacts with host CLDN1; this interaction plays a role in viral entry into host cell. Part of the viral assembly initiation complex composed of NS2, E1, E2, NS3, NS4A, NS5A and the mature core protein. Post-translationally, specific enzymatic cleavages in vivo yield mature proteins. The structural proteins, core, E1, E2 and p7 are produced by proteolytic processing by host signal peptidases. The core protein precursor is synthesized as a 23 kDa, which is retained in the ER membrane through the hydrophobic signal peptide. Cleavage by the signal peptidase releases the 21 kDa mature core protein. The cleavage of the core protein precursor occurs between aminoacids 176 and 188 but the exact cleavage site is not known. Some degraded forms of the core protein appear as well during the course of infection. The other proteins (p7, NS2, NS3, NS4A, NS4B, NS5A and NS5B) are cleaved by the viral proteases. Autoprocessing between NS2 and NS3 is mediated by the NS2 cysteine protease catalytic domain and regulated by the NS3 N-terminal domain. In terms of processing, phosphorylated by host PKC and PKA. Ubiquitinated; mediated by UBE3A and leading to core protein subsequent proteasomal degradation. Post-translationally, highly N-glycosylated.

The protein localises to the host endoplasmic reticulum membrane. Its subcellular location is the host mitochondrion membrane. It localises to the virion. The protein resides in the host cytoplasm. It is found in the host nucleus. The protein localises to the host lipid droplet. Its subcellular location is the virion membrane. In terms of biological role, packages viral RNA to form a viral nucleocapsid, and promotes virion budding. Participates in the viral particle production as a result of its interaction with the non-structural protein 5A. Binds RNA and may function as a RNA chaperone to induce the RNA structural rearrangements taking place during virus replication. Modulates viral translation initiation by interacting with viral IRES and 40S ribosomal subunit. Affects various cell signaling pathways, host immunity and lipid metabolism. Prevents the establishment of cellular antiviral state by blocking the interferon-alpha/beta (IFN-alpha/beta) and IFN-gamma signaling pathways and by blocking the formation of phosphorylated STAT1 and promoting ubiquitin-mediated proteasome-dependent degradation of STAT1. Activates STAT3 leading to cellular transformation. Regulates the activity of cellular genes, including c-myc and c-fos. May repress the promoter of p53, and sequester CREB3 and SP110 isoform 3/Sp110b in the cytoplasm. Represses cell cycle negative regulating factor CDKN1A, thereby interrupting an important check point of normal cell cycle regulation. Targets transcription factors involved in the regulation of inflammatory responses and in the immune response: suppresses TNF-induced NF-kappa-B activation, and activates AP-1. Binds to dendritic cells (DCs) via C1QR1, resulting in down-regulation of T-lymphocytes proliferation. Alters lipid metabolism by interacting with hepatocellular proteins involved in lipid accumulation and storage. Induces up-regulation of FAS promoter activity, and thereby contributes to the increased triglyceride accumulation in hepatocytes (steatosis). Functionally, forms a heterodimer with envelope glycoprotein E2, which mediates virus attachment to the host cell, virion internalization through clathrin-dependent endocytosis and fusion with host membrane. Fusion with the host cell is most likely mediated by both E1 and E2, through conformational rearrangements of the heterodimer required for fusion rather than a classical class II fusion mechanism. E1/E2 heterodimer binds host apolipoproteins such as APOB and ApoE thereby forming a lipo-viro-particle (LVP). APOE associated to the LVP allows the initial virus attachment to cell surface receptors such as the heparan sulfate proteoglycans (HSPGs), syndecan-1 (SDC1), syndecan-1 (SDC2), the low-density lipoprotein receptor (LDLR) and scavenger receptor class B type I (SCARB1). The cholesterol transfer activity of SCARB1 allows E2 exposure and binding of E2 to SCARB1 and the tetraspanin CD81. E1/E2 heterodimer binding on CD81 activates the epithelial growth factor receptor (EGFR) signaling pathway. Diffusion of the complex E1-E2-EGFR-SCARB1-CD81 to the cell lateral membrane allows further interaction with Claudin 1 (CLDN1) and occludin (OCLN) to finally trigger HCV entry. Forms a heterodimer with envelope glycoprotein E1, which mediates virus attachment to the host cell, virion internalization through clathrin-dependent endocytosis and fusion with host membrane. Fusion with the host cell is most likely mediated by both E1 and E2, through conformational rearrangements of the heterodimer required for fusion rather than a classical class II fusion mechanism. The interaction between envelope glycoprotein E2 and host apolipoprotein E/APOE allows the proper assembly, maturation and infectivity of the viral particles. This interaction is probably promoted via the up-regulation of cellular autophagy by the virus. E1/E2 heterodimer binds host apolipoproteins such as APOB and APOE thereby forming a lipo-viro-particle (LVP). APOE associated to the LVP allows the initial virus attachment to cell surface receptors such as the heparan sulfate proteoglycans (HSPGs), syndecan-1 (SDC1), syndecan-1 (SDC2), the low-density lipoprotein receptor (LDLR) and scavenger receptor class B type I (SCARB1). The cholesterol transfer activity of SCARB1 allows E2 exposure and binding of E2 to SCARB1 and the tetraspanin CD81. E1/E2 heterodimer binding on CD81 activates the epithelial growth factor receptor (EGFR) signaling pathway. Diffusion of the complex E1-E2-EGFR-SCARB1-CD81 to the cell lateral membrane allows further interaction with Claudin 1 (CLDN1) and occludin (OCLN) to finally trigger HCV entry. Inhibits host EIF2AK2/PKR activation, preventing the establishment of an antiviral state. Viral ligand for CD209/DC-SIGN and CLEC4M/DC-SIGNR, which are respectively found on dendritic cells (DCs), and on liver sinusoidal endothelial cells and macrophage-like cells of lymph node sinuses. These interactions allow the capture of circulating HCV particles by these cells and subsequent facilitated transmission to permissive cells such as hepatocytes and lymphocyte subpopulations. This chain is Genome polyprotein, found in Hepatitis C virus (isolate HCT18) (HCV).